The chain runs to 449 residues: Glucose-6-phosphate isomerase (449 aa).

Glutamate 291 functions as the Proton donor in the catalytic mechanism. Active-site residues include histidine 312 and lysine 426.

Belongs to the GPI family.

It localises to the cytoplasm. It catalyses the reaction alpha-D-glucose 6-phosphate = beta-D-fructose 6-phosphate. Its pathway is carbohydrate biosynthesis; gluconeogenesis. It functions in the pathway carbohydrate degradation; glycolysis; D-glyceraldehyde 3-phosphate and glycerone phosphate from D-glucose: step 2/4. In terms of biological role, catalyzes the reversible isomerization of glucose-6-phosphate to fructose-6-phosphate. The protein is Glucose-6-phosphate isomerase of Streptococcus agalactiae serotype Ia (strain ATCC 27591 / A909 / CDC SS700).